Here is a 207-residue protein sequence, read N- to C-terminus: Small ribosomal subunit protein uS4 (207 aa).

The disordered stretch occupies residues 31–55; the sequence is KCKLDSKPGQHGRTSGARTSDYGTQ. A compositionally biased stretch (polar residues) spans 42-53; that stretch reads GRTSGARTSDYG. Positions 97–160 constitute an S4 RNA-binding domain; that stretch reads SRLDNVVYRM…KKQARIVEAL (64 aa).

The protein belongs to the universal ribosomal protein uS4 family. As to quaternary structure, part of the 30S ribosomal subunit. Contacts protein S5. The interaction surface between S4 and S5 is involved in control of translational fidelity.

Functionally, one of the primary rRNA binding proteins, it binds directly to 16S rRNA where it nucleates assembly of the body of the 30S subunit. Its function is as follows. With S5 and S12 plays an important role in translational accuracy. The chain is Small ribosomal subunit protein uS4 from Burkholderia lata (strain ATCC 17760 / DSM 23089 / LMG 22485 / NCIMB 9086 / R18194 / 383).